The following is a 141-amino-acid chain: Protein stum homolog (141 aa).

The residue at position 26 (Ser-26) is a Phosphoserine. The next 2 helical transmembrane spans lie at 51–71 and 87–107; these read FPVAVICLFLNTFVPGLGTFV and RHVCCVFWLNIAAALIQILTA.

Belongs to the SPEC3 family. Stum subfamily.

It localises to the membrane. This chain is Protein stum homolog, found in Homo sapiens (Human).